A 1456-amino-acid polypeptide reads, in one-letter code: Retrovirus-related Pol polyprotein from transposon RE2 (1456 aa).

The tract at residues 205-252 (NVVTHRNTNTNRNQNNRGDNRNYNNNNNRSNSWQPSSSGSRSDNRQPK) is disordered. Positions 210–245 (RNTNTNRNQNNRGDNRNYNNNNNRSNSWQPSSSGSR) are enriched in low complexity. The CCHC-type zinc finger occupies 257–273 (RCQICSVQGHSAKRCPQ). Positions 276–291 (QFQSTTNQQQSTSPFT) are enriched in low complexity. Residues 276–295 (QFQSTTNQQQSTSPFTPWQP) form a disordered region. Catalysis depends on D313, which acts as the For protease activity. In terms of domain architecture, Integrase catalytic spans 498–661 (TSSKPLEYIY…SPFQKLFGQP (164 aa)). 2 residues coordinate Mg(2+): D509 and D571. Over residues 738–754 (STSQEQRSDSAPNWPSH) the composition is skewed to polar residues. Positions 738–896 (STSQEQRSDS…PPLPPVLPAP (159 aa)) are disordered. Positions 793–814 (SSSNLPSSSISSPSSSEPTAPS) are enriched in low complexity. The segment covering 816-827 (NGPQPTAQPHQT) has biased composition (polar residues). 2 stretches are compositionally biased toward low complexity: residues 828 to 841 (QNSN…NNPN) and 849 to 886 (SPNQ…STST). Positions 887 to 896 (PPLPPVLPAP) are enriched in pro residues. The region spanning 965–1208 (NHTWDLVPPP…LTAKPVATPM (244 aa)) is the Reverse transcriptase Ty1/copia-type domain.

The enzyme catalyses DNA(n) + a 2'-deoxyribonucleoside 5'-triphosphate = DNA(n+1) + diphosphate. This Arabidopsis thaliana (Mouse-ear cress) protein is Retrovirus-related Pol polyprotein from transposon RE2 (RE2).